A 330-amino-acid chain; its full sequence is MISFSSFYKQISDSSLQHWLETLPSILGQWQRDHKHGSLPKWEKVLNKLHYPDADIIDFKTSVKIGSGEQLSDGEREKLENLLGIFKPWRKGPYSLHGVEIDTEWRSDWKWERVVPHISPLANRTVLDVGCGSGYHMWRMLGEGAKHVVGIDPSPLFMCQFEAVKRLAGNEHPVHFLPLGIEELPPLDAFDTVFSMGVLYHRRSPIDHIYQLRDQLRTGGELVLETLVIDGDENTVLVPKDRYGKMNNVWFLPSVDALMLWLKKCDFTDIRCVDVDVTSLAEQRSTQWMPNESLVDYLDPNDVSLTVEGYPAPKRATIIATKNQPNKDLI.

Residues Lys-91, Trp-105, Lys-110, Gly-130, 152-154 (DPS), 181-182 (IE), Met-196, Tyr-200, and Arg-315 each bind carboxy-S-adenosyl-L-methionine.

Belongs to the class I-like SAM-binding methyltransferase superfamily. CmoB family. In terms of assembly, homotetramer.

The enzyme catalyses carboxy-S-adenosyl-L-methionine + 5-hydroxyuridine(34) in tRNA = 5-carboxymethoxyuridine(34) in tRNA + S-adenosyl-L-homocysteine + H(+). In terms of biological role, catalyzes carboxymethyl transfer from carboxy-S-adenosyl-L-methionine (Cx-SAM) to 5-hydroxyuridine (ho5U) to form 5-carboxymethoxyuridine (cmo5U) at position 34 in tRNAs. This Shewanella pealeana (strain ATCC 700345 / ANG-SQ1) protein is tRNA U34 carboxymethyltransferase.